A 153-amino-acid polypeptide reads, in one-letter code: Putative WASP homolog-associated protein with actin, membranes and microtubules-like protein 1 (153 aa).

Residues 113–151 (AIQFYEIQLELYEVKFEILKNKEILLTTQLDSLERLIKD) are a coiled coil.

The polypeptide is Putative WASP homolog-associated protein with actin, membranes and microtubules-like protein 1 (WHAMMP3) (Homo sapiens (Human)).